The following is a 288-amino-acid chain: Orotidine 5'-phosphate decarboxylase (288 aa).

The Proton donor role is filled by Lys-97.

Belongs to the OMP decarboxylase family. Type 2 subfamily.

It carries out the reaction orotidine 5'-phosphate + H(+) = UMP + CO2. The protein operates within pyrimidine metabolism; UMP biosynthesis via de novo pathway; UMP from orotate: step 2/2. The chain is Orotidine 5'-phosphate decarboxylase from Clostridium tetani (strain Massachusetts / E88).